Reading from the N-terminus, the 121-residue chain is Protein yippee-like At3g55890 (121 aa).

Residues 12–109 (NIYICKLCKT…LELYKISGPH (98 aa)) form the Yippee domain. Zn(2+) contacts are provided by cysteine 16, cysteine 19, cysteine 72, and cysteine 75.

The protein belongs to the yippee family.

In Arabidopsis thaliana (Mouse-ear cress), this protein is Protein yippee-like At3g55890.